A 173-amino-acid polypeptide reads, in one-letter code: Alpha-crystallin A chain (173 aa).

M1 carries the N-acetylmethionine modification. The interval 1–63 (MDIAIQHPWF…RTVLDSGISE (63 aa)) is required for complex formation with BFSP1 and BFSP2. The residue at position 6 (Q6) is a Deamidated glutamine; partial. Position 45 is a phosphoserine (S45). A Deamidated glutamine; partial modification is found at Q50. In terms of domain architecture, sHSP spans 52–162 (LFRTVLDSGI…GHSERAIPVS (111 aa)). K70 is subject to N6-acetyllysine. Q90 carries the deamidated glutamine; partial modification. The residue at position 99 (K99) is an N6-acetyllysine. H100 serves as a coordination point for Zn(2+). N101 carries the post-translational modification Deamidated asparagine; partial. E102 and H107 together coordinate Zn(2+). S122 is subject to Phosphoserine. N123 bears the Deamidated asparagine; partial mark. The disordered stretch occupies residues 144–173 (PKVPSGVDAGHSERAIPVSREEKPSSAPSS). Over residues 153–167 (GHSERAIPVSREEKP) the composition is skewed to basic and acidic residues. A Zn(2+)-binding site is contributed by H154. O-linked (GlcNAc) serine glycosylation is present at S162.

It belongs to the small heat shock protein (HSP20) family. In terms of assembly, heteromer composed of three CRYAA and one CRYAB subunits. Inter-subunit bridging via zinc ions enhances stability, which is crucial as there is no protein turn over in the lens. Can also form homodimers and homotetramers (dimers of dimers) which serve as the building blocks of homooligomers. Within homooligomers, the zinc-binding motif is created from residues of 3 different molecules. His-100 and Glu-102 from one molecule are ligands of the zinc ion, and His-107 and His-154 residues from additional molecules complete the site with tetrahedral coordination geometry. Part of a complex required for lens intermediate filament formation composed of BFSP1, BFSP2 and CRYAA. In terms of processing, acetylation at Lys-70 may increase chaperone activity. Undergoes age-dependent proteolytical cleavage at the C-terminus.

It localises to the cytoplasm. It is found in the nucleus. Functionally, contributes to the transparency and refractive index of the lens. Acts as a chaperone, preventing aggregation of various proteins under a wide range of stress conditions. Required for the correct formation of lens intermediate filaments as part of a complex composed of BFSP1, BFSP2 and CRYAA. The sequence is that of Alpha-crystallin A chain (CRYAA) from Ovis aries (Sheep).